The sequence spans 200 residues: N-(5'-phosphoribosyl)anthranilate isomerase (200 aa).

The protein belongs to the TrpF family.

The catalysed reaction is N-(5-phospho-beta-D-ribosyl)anthranilate = 1-(2-carboxyphenylamino)-1-deoxy-D-ribulose 5-phosphate. The protein operates within amino-acid biosynthesis; L-tryptophan biosynthesis; L-tryptophan from chorismate: step 3/5. The chain is N-(5'-phosphoribosyl)anthranilate isomerase from Endomicrobium trichonymphae.